The sequence spans 225 residues: PKHD-type hydroxylase YbiX (225 aa).

Residues 78 to 177 (TLSTPLFNRY…RVASFMWIQS (100 aa)) enclose the Fe2OG dioxygenase domain. 3 residues coordinate Fe cation: histidine 96, aspartate 98, and histidine 158. 2-oxoglutarate is bound at residue arginine 168.

Fe(2+) serves as cofactor. L-ascorbate is required as a cofactor.

In Shigella sonnei (strain Ss046), this protein is PKHD-type hydroxylase YbiX.